A 313-amino-acid polypeptide reads, in one-letter code: Probable cell division protein WhiA (313 aa).

Residues 280 to 313 (SLKELGAMLNPPIGKSGVNHRLKKLCSIADGLRQ) constitute a DNA-binding region (H-T-H motif).

Belongs to the WhiA family.

Involved in cell division and chromosome segregation. The protein is Probable cell division protein WhiA of Lachnoclostridium phytofermentans (strain ATCC 700394 / DSM 18823 / ISDg) (Clostridium phytofermentans).